Here is a 455-residue protein sequence, read N- to C-terminus: GTPase Der (455 aa).

EngA-type G domains lie at F3–A167 and I184–N359. Residues G9–S16, D56–L60, N119–E122, G190–S197, D237–L241, and N302–D305 each bind GTP. Positions R360 to A444 constitute a KH-like domain.

It belongs to the TRAFAC class TrmE-Era-EngA-EngB-Septin-like GTPase superfamily. EngA (Der) GTPase family. As to quaternary structure, associates with the 50S ribosomal subunit.

Functionally, GTPase that plays an essential role in the late steps of ribosome biogenesis. This chain is GTPase Der, found in Nitrobacter winogradskyi (strain ATCC 25391 / DSM 10237 / CIP 104748 / NCIMB 11846 / Nb-255).